Here is a 131-residue protein sequence, read N- to C-terminus: C-glycoside deglycosidase beta subunit (131 aa).

This sequence belongs to the C-glycoside deglycosidase beta subunit family. In terms of assembly, heterodimer composed of an alpha subunit (CarB) and a beta subunit (CarC). A divalent metal cation serves as cofactor.

It carries out the reaction 3''-dehydroisovitexin = 1,5-anhydro-D-erythro-hex-1-en-3-ulose + apigenin. The catalysed reaction is 3''-dehydroisoorientin = 1,5-anhydro-D-erythro-hex-1-en-3-ulose + luteolin. Functionally, carbon-carbon bond-cleaving enzyme which participates in the metabolism of C-glycosides. Acts on the C6-glycosylated compounds 3''-dehydroisovitexin (3''-oxo-isovitexin) and 3''-dehydroisoorientin (3''-oxo-homoorientin). Shows weak activity with 3'-dehydromangiferin (3'-oxo-mangiferin). In Microbacterium trichothecenolyticum (Aureobacterium trichothecenolyticum), this protein is C-glycoside deglycosidase beta subunit.